The sequence spans 261 residues: Intermembrane phospholipid transport system permease protein MlaE (261 aa).

At 1–12 (MIVNFISALGKQ) the chain is on the cytoplasmic side. Residues 13–33 (VIDFFRALGRAGFMLFGALIG) traverse the membrane as a helical segment. The Periplasmic portion of the chain corresponds to 34 to 49 (KPQIRKHFPLLVKQMH). A helical transmembrane segment spans residues 50 to 70 (VLGVQSLLIILLSGLFIGMVL). Residues 71–147 (GLQGYVVLID…DPLRRVIAPR (77 aa)) are Cytoplasmic-facing. Residues 148–168 (FWAGVISMPVLSILFIAIGIW) form a helical membrane-spanning segment. Topologically, residues 169-198 (GGSLVGVDWKGVDSGSFWSVMQNSVSWSYD) are periplasmic. The chain crosses the membrane as a helical span at residues 199 to 219 (ILNGFIKAVFFAVAVTWIALF). Residues 220–238 (NGYDCMPTSEGISQATTRT) lie on the Cytoplasmic side of the membrane. The chain crosses the membrane as a helical span at residues 239 to 259 (VVHASLVVLGLDFILTAIMFG). Over 260-261 (AG) the chain is Periplasmic.

Belongs to the MlaE permease family. The complex is composed of two ATP-binding proteins (MlaF), two transmembrane proteins (MlaE), two cytoplasmic solute-binding proteins (MlaB) and six periplasmic solute-binding proteins (MlaD).

It localises to the cell inner membrane. In terms of biological role, part of the ABC transporter complex MlaFEDB, which is involved in a phospholipid transport pathway that maintains lipid asymmetry in the outer membrane by retrograde trafficking of phospholipids from the outer membrane to the inner membrane. Probably responsible for the translocation of the substrate across the membrane. This Haemophilus influenzae (strain ATCC 51907 / DSM 11121 / KW20 / Rd) protein is Intermembrane phospholipid transport system permease protein MlaE.